Consider the following 410-residue polypeptide: Transcription factor Dp-1 (410 aa).

K3 carries the N6-acetyllysine modification. A Phosphoserine; by CDK2 modification is found at S23. The tract at residues 77 to 114 is disordered; that stretch reads VVGSPHTPNTHFVSQNQPSDPSPWSAGKRNRKGEKNGK. Positions 82 to 95 are enriched in polar residues; the sequence is HTPNTHFVSQNQPS. Basic residues predominate over residues 104–114; the sequence is KRNRKGEKNGK. Residues 105-127 form an interaction with CEBPA region; sequence RNRKGEKNGKGLRHFSMKVCEKV. The DNA-binding element occupies 113-195; it reads GKGLRHFSMK…KKEIKWIGLP (83 aa). Residues 161-195 carry the DEF box motif; it reads DQKNIRRRVYDALNVLMAMNIISKEKKEIKWIGLP. Residues 204-277 are dimerization; sequence SLEVERQRRL…KKTVIDCSIS (74 aa). An enhances binding of RB protein to E2F region spans residues 211–327; the sequence is RRLERIKQKQ…DLRVARSLVP (117 aa). A DCB1 region spans residues 214 to 246; sequence ERIKQKQSQLQELILQQIAFKNLVQRNRQVEQQ. The tract at residues 259 to 315 is DCB2; sequence LPFIIVNTSKKTVIDCSISNDKFEYLFNFDNTFEIHDDIEVLKRMGMACGLESGSCS. The tract at residues 370–410 is disordered; it reads GALATSSSGSQYSGSRVETPVSCVGEDDEDDEDFNENEEED. A compositionally biased stretch (low complexity) spans 375–384; the sequence is SSSGSQYSGS. Residues 394–410 are compositionally biased toward acidic residues; that stretch reads GEDDEDDEDFNENEEED.

The protein belongs to the E2F/DP family. In terms of assembly, component of the E2F:DP transcription factor complex. Forms heterodimers with E2F family members. The complex can interact with hypophosphorylated retinoblastoma protein RB1 and related proteins (RBL1 and RBL2) that inhibit the E2F transactivation domain. This repression involves recruitment of histone deacetylase (HDAC). During the cell cycle, from mid-to-late G1 phase, RB family members become phosphorylated, detach from the DRTF1/E2F complex to render E2F transcriptionally active. Part of the E2F6.com-1 complex in G0 phase is composed of E2F6, MGA, MAX, TFDP1, CBX3, BAT8, EUHMTASE1, RING1, RNF2, MBLR, L3MBTL2 YAF2. Component of the DREAM complex (also named LINC complex) at least composed of E2F4, E2F5, LIN9, LIN37, LIN52, LIN54, MYBL1, MYBL2, RBL1, RBL2, RBBP4, TFDP1 and TFDP2. The complex exists in quiescent cells where it represses cell cycle-dependent genes. It dissociates in S phase when LIN9, LIN37, LIN52 and LIN54 form a subcomplex that binds to MYBL2. The complex TFDP1:E2F1 interacts with CEBPA; the interaction prevents CEBPA binding to target gene promoters and represses its transcriptional activity. Post-translationally, ubiquitinated by the BCR(KBTBD5) complex, leading to its subsequent degradation. In terms of processing, phosphorylation by E2F1-bound cyclin A-CDK2, in the S phase, inhibits E2F-mediated DNA binding and transactivation.

The protein localises to the nucleus. It localises to the cytoplasm. In terms of biological role, can stimulate E2F-dependent transcription. Binds DNA cooperatively with E2F family members through the E2 recognition site, 5'-TTTC[CG]CGC-3', found in the promoter region of a number of genes whose products are involved in cell cycle regulation or in DNA replication. The E2F1:DP complex appears to mediate both cell proliferation and apoptosis. Blocks adipocyte differentiation by repressing CEBPA binding to its target gene promoters. The polypeptide is Transcription factor Dp-1 (TFDP1) (Bos taurus (Bovine)).